A 430-amino-acid chain; its full sequence is Adenylosuccinate synthetase (430 aa).

Residues 13-19 (GDEGKGK) and 41-43 (GHT) contribute to the GTP site. The Proton acceptor role is filled by Asp14. Residues Asp14 and Gly41 each coordinate Mg(2+). IMP contacts are provided by residues 14-17 (DEGK), 39-42 (NAGH), Thr130, Arg144, Gln225, Thr240, and Arg304. Residue His42 is the Proton donor of the active site. Residue 300-306 (ASTGRPR) coordinates substrate. GTP-binding positions include Arg306, 332-334 (KLD), and 414-416 (STG).

Belongs to the adenylosuccinate synthetase family. As to quaternary structure, homodimer. Mg(2+) serves as cofactor.

It localises to the cytoplasm. The enzyme catalyses IMP + L-aspartate + GTP = N(6)-(1,2-dicarboxyethyl)-AMP + GDP + phosphate + 2 H(+). It participates in purine metabolism; AMP biosynthesis via de novo pathway; AMP from IMP: step 1/2. Its function is as follows. Plays an important role in the de novo pathway of purine nucleotide biosynthesis. Catalyzes the first committed step in the biosynthesis of AMP from IMP. The polypeptide is Adenylosuccinate synthetase (Xanthomonas oryzae pv. oryzae (strain MAFF 311018)).